The primary structure comprises 155 residues: Large ribosomal subunit protein uL22c (155 aa).

This sequence belongs to the universal ribosomal protein uL22 family. In terms of assembly, part of the 50S ribosomal subunit.

It localises to the plastid. The protein resides in the chloroplast. This protein binds specifically to 23S rRNA. Its function is as follows. The globular domain of the protein is located near the polypeptide exit tunnel on the outside of the subunit, while an extended beta-hairpin is found that lines the wall of the exit tunnel in the center of the 70S ribosome. The polypeptide is Large ribosomal subunit protein uL22c (rpl22) (Nicotiana sylvestris (Wood tobacco)).